A 299-amino-acid chain; its full sequence is Fibrinogen silencer-binding protein (299 aa).

A Glycyl lysine isopeptide (Lys-Gly) (interchain with G-Cter in SUMO2) cross-link involves residue K94.

In terms of assembly, interacts with APBA1 (via PDZ 1 and 2 domains). As to expression, expressed in multiple tissues including brain.

The protein localises to the nucleus. Transcriptional repressor that down-regulates the expression of the fibrinogen gamma chain. Represses transcription of GSK3B gene promoter via its interaction with APBA1. The chain is Fibrinogen silencer-binding protein (FSBP) from Homo sapiens (Human).